A 355-amino-acid chain; its full sequence is Neutral protease 2 homolog AFUB_100460 (355 aa).

Positions M1–A19 are cleaved as a signal peptide. Positions L20–R172 are excised as a propeptide. Cystine bridges form between C179–C251 and C258–C276. Residue H300 coordinates Zn(2+). The active site involves E301. The Zn(2+) site is built by H304 and D315.

This sequence belongs to the peptidase M35 family. The cofactor is Zn(2+).

It is found in the secreted. It carries out the reaction Preferential cleavage of bonds with hydrophobic residues in P1'. Also 3-Asn-|-Gln-4 and 8-Gly-|-Ser-9 bonds in insulin B chain.. Secreted metalloproteinase that allows assimilation of proteinaceous substrates. Shows high activities on basic nuclear substrates such as histone and protamine. May be involved in virulence. The protein is Neutral protease 2 homolog AFUB_100460 of Aspergillus fumigatus (strain CBS 144.89 / FGSC A1163 / CEA10) (Neosartorya fumigata).